A 590-amino-acid chain; its full sequence is Aspartate--tRNA(Asp/Asn) ligase (590 aa).

Glu170 serves as a coordination point for L-aspartate. An aspartate region spans residues 194–197 (QLFK). Residue Arg216 coordinates L-aspartate. ATP is bound by residues 216–218 (RDE) and Gln225. His448 lines the L-aspartate pocket. Glu482 contacts ATP. An L-aspartate-binding site is contributed by Arg489. 534–537 (GWDR) lines the ATP pocket. The tract at residues 557–590 (SGGGADPLTGAPAPITPQQRRESGIDAKPKKDGE) is disordered. Over residues 575–590 (QRRESGIDAKPKKDGE) the composition is skewed to basic and acidic residues.

The protein belongs to the class-II aminoacyl-tRNA synthetase family. Type 1 subfamily. In terms of assembly, homodimer.

The protein localises to the cytoplasm. The enzyme catalyses tRNA(Asx) + L-aspartate + ATP = L-aspartyl-tRNA(Asx) + AMP + diphosphate. Aspartyl-tRNA synthetase with relaxed tRNA specificity since it is able to aspartylate not only its cognate tRNA(Asp) but also tRNA(Asn). Reaction proceeds in two steps: L-aspartate is first activated by ATP to form Asp-AMP and then transferred to the acceptor end of tRNA(Asp/Asn). This is Aspartate--tRNA(Asp/Asn) ligase from Mycobacterium sp. (strain KMS).